The primary structure comprises 476 residues: Aspartyl/glutamyl-tRNA(Asn/Gln) amidotransferase subunit B (476 aa).

Belongs to the GatB/GatE family. GatB subfamily. Heterotrimer of A, B and C subunits.

It carries out the reaction L-glutamyl-tRNA(Gln) + L-glutamine + ATP + H2O = L-glutaminyl-tRNA(Gln) + L-glutamate + ADP + phosphate + H(+). The enzyme catalyses L-aspartyl-tRNA(Asn) + L-glutamine + ATP + H2O = L-asparaginyl-tRNA(Asn) + L-glutamate + ADP + phosphate + 2 H(+). Functionally, allows the formation of correctly charged Asn-tRNA(Asn) or Gln-tRNA(Gln) through the transamidation of misacylated Asp-tRNA(Asn) or Glu-tRNA(Gln) in organisms which lack either or both of asparaginyl-tRNA or glutaminyl-tRNA synthetases. The reaction takes place in the presence of glutamine and ATP through an activated phospho-Asp-tRNA(Asn) or phospho-Glu-tRNA(Gln). The polypeptide is Aspartyl/glutamyl-tRNA(Asn/Gln) amidotransferase subunit B (Lactobacillus acidophilus (strain ATCC 700396 / NCK56 / N2 / NCFM)).